Consider the following 691-residue polypeptide: Elongation factor G (691 aa).

Residues 8 to 283 (EDYRNFGIMA…AVVDYLPSPI (276 aa)) enclose the tr-type G domain. Residues 17-24 (AHIDAGKT), 81-85 (DTPGH), and 135-138 (NKMD) contribute to the GTP site.

The protein belongs to the TRAFAC class translation factor GTPase superfamily. Classic translation factor GTPase family. EF-G/EF-2 subfamily.

The protein resides in the cytoplasm. In terms of biological role, catalyzes the GTP-dependent ribosomal translocation step during translation elongation. During this step, the ribosome changes from the pre-translocational (PRE) to the post-translocational (POST) state as the newly formed A-site-bound peptidyl-tRNA and P-site-bound deacylated tRNA move to the P and E sites, respectively. Catalyzes the coordinated movement of the two tRNA molecules, the mRNA and conformational changes in the ribosome. This is Elongation factor G from Methylocella silvestris (strain DSM 15510 / CIP 108128 / LMG 27833 / NCIMB 13906 / BL2).